We begin with the raw amino-acid sequence, 209 residues long: Chaperone protein TorD (209 aa).

The protein belongs to the TorD/DmsD family. TorD subfamily.

It localises to the cytoplasm. Functionally, involved in the biogenesis of TorA. Acts on TorA before the insertion of the molybdenum cofactor and, as a result, probably favors a conformation of the apoenzyme that is competent for acquiring the cofactor. In Salmonella bongori (strain ATCC 43975 / DSM 13772 / NCTC 12419), this protein is Chaperone protein TorD.